A 136-amino-acid polypeptide reads, in one-letter code: Large ribosomal subunit protein uL16 (136 aa).

It belongs to the universal ribosomal protein uL16 family. Part of the 50S ribosomal subunit.

Functionally, binds 23S rRNA and is also seen to make contacts with the A and possibly P site tRNAs. This is Large ribosomal subunit protein uL16 from Karelsulcia muelleri (strain GWSS) (Sulcia muelleri).